A 293-amino-acid chain; its full sequence is Nucleotide-binding protein BC_5156 (293 aa).

14-21 provides a ligand contact to ATP; that stretch reads GMSGAGKT. Residue 65 to 68 participates in GTP binding; sequence DLRG.

Belongs to the RapZ-like family.

Functionally, displays ATPase and GTPase activities. The sequence is that of Nucleotide-binding protein BC_5156 from Bacillus cereus (strain ATCC 14579 / DSM 31 / CCUG 7414 / JCM 2152 / NBRC 15305 / NCIMB 9373 / NCTC 2599 / NRRL B-3711).